A 424-amino-acid chain; its full sequence is Serine--tRNA ligase (424 aa).

Residue 231 to 233 coordinates L-serine; that stretch reads TAE. 262 to 264 is a binding site for ATP; the sequence is RAE. E285 contributes to the L-serine binding site. 349–352 serves as a coordination point for ATP; the sequence is EISS. S385 is a binding site for L-serine.

It belongs to the class-II aminoacyl-tRNA synthetase family. Type-1 seryl-tRNA synthetase subfamily. Homodimer. The tRNA molecule binds across the dimer.

Its subcellular location is the cytoplasm. It carries out the reaction tRNA(Ser) + L-serine + ATP = L-seryl-tRNA(Ser) + AMP + diphosphate + H(+). It catalyses the reaction tRNA(Sec) + L-serine + ATP = L-seryl-tRNA(Sec) + AMP + diphosphate + H(+). Its pathway is aminoacyl-tRNA biosynthesis; selenocysteinyl-tRNA(Sec) biosynthesis; L-seryl-tRNA(Sec) from L-serine and tRNA(Sec): step 1/1. In terms of biological role, catalyzes the attachment of serine to tRNA(Ser). Is also able to aminoacylate tRNA(Sec) with serine, to form the misacylated tRNA L-seryl-tRNA(Sec), which will be further converted into selenocysteinyl-tRNA(Sec). The chain is Serine--tRNA ligase from Geobacillus thermodenitrificans (strain NG80-2).